Reading from the N-terminus, the 132-residue chain is Glycerol-3-phosphate cytidylyltransferase (132 aa).

Residues 9–10 and 14–17 each bind CTP; these read TY and HYGH. Lys-44 lines the substrate pocket. Residue Lys-46 coordinates CTP. A substrate-binding site is contributed by Lys-77. Residue 113 to 120 coordinates CTP; the sequence is RTEGISTT.

Belongs to the cytidylyltransferase family. Homotetramer or homodimer.

The protein resides in the cytoplasm. The catalysed reaction is sn-glycerol 3-phosphate + CTP + H(+) = CDP-glycerol + diphosphate. It participates in cell wall biogenesis; poly(ribitol phosphate) teichoic acid biosynthesis. In terms of biological role, catalyzes the transfer of the cytidylyl group of CTP to sn-glycerol 3-phosphate so the activated glycerol 3-phosphate can be used for teichoic acid synthesis, via incorporation into both the linkage unit by TarB and TarF. The chain is Glycerol-3-phosphate cytidylyltransferase from Staphylococcus aureus (strain NCTC 8325 / PS 47).